A 357-amino-acid chain; its full sequence is Homoserine O-acetyltransferase (357 aa).

The AB hydrolase-1 domain occupies 51–340 (NVIVICHALT…EPYGHDAFLI (290 aa)). The Nucleophile role is filled by Ser147. Arg216 contacts substrate. Catalysis depends on residues Asp306 and His335. Substrate is bound at residue Asp336.

It belongs to the AB hydrolase superfamily. MetX family. In terms of assembly, homodimer.

It is found in the cytoplasm. It catalyses the reaction L-homoserine + acetyl-CoA = O-acetyl-L-homoserine + CoA. It participates in amino-acid biosynthesis; L-methionine biosynthesis via de novo pathway; O-acetyl-L-homoserine from L-homoserine: step 1/1. Transfers an acetyl group from acetyl-CoA to L-homoserine, forming acetyl-L-homoserine. In Chlorobium chlorochromatii (strain CaD3), this protein is Homoserine O-acetyltransferase.